Here is a 154-residue protein sequence, read N- to C-terminus: Small ribosomal subunit protein uS7c (154 aa).

It belongs to the universal ribosomal protein uS7 family. As to quaternary structure, part of the 30S ribosomal subunit.

The protein resides in the plastid. It localises to the chloroplast. Functionally, one of the primary rRNA binding proteins, it binds directly to 16S rRNA where it nucleates assembly of the head domain of the 30S subunit. In Pleurastrum terricola (Filamentous green alga), this protein is Small ribosomal subunit protein uS7c (rps7).